The sequence spans 255 residues: Hydroxyacylglutathione hydrolase (255 aa).

Zn(2+) is bound by residues His53, His55, Asp57, His58, His110, Asp127, and His165.

This sequence belongs to the metallo-beta-lactamase superfamily. Glyoxalase II family. Monomer. Zn(2+) is required as a cofactor.

The enzyme catalyses an S-(2-hydroxyacyl)glutathione + H2O = a 2-hydroxy carboxylate + glutathione + H(+). It participates in secondary metabolite metabolism; methylglyoxal degradation; (R)-lactate from methylglyoxal: step 2/2. Its function is as follows. Thiolesterase that catalyzes the hydrolysis of S-D-lactoyl-glutathione to form glutathione and D-lactic acid. The polypeptide is Hydroxyacylglutathione hydrolase (Xanthomonas campestris pv. campestris (strain 8004)).